We begin with the raw amino-acid sequence, 1387 residues long: MTVAATVLPAGEDAPAYRPRSYQVEMFEASLKENIIVTMGTGSGKTHIALLRIIKELESNPHKLIWFLTPTVALCLQQFKFLSDNIPAVRARTLTSLDKVELWTEQPVWDAILKEMQVVVSTHAVLADAMSHGFVKITQLGLMIFDEAHHCMRRHPANKIMQDFYHPALERHGAEAVPKILGLTASPVVRSNRQELLKIESNLDAVCKTPRTHRSELMTHTHRPHLQQILFTPVLLDDLQVGSKTLKALVSAWTSLRLEDDPYIKKLRKSPLDGRALQKVLESGKTYCNDQLKRFATRSLHIFEELGEWAADYFIHASIEQLKARAGNSADTMGWTDEEKAYLLDIVSKLPIPNIDLTHSDPDRIPISSKFRSLLEFLDTKGEPNFSGLIFAKQRATVSVMEKLLSIHPVTKHRFRCASFVGWSGGGSKDVLGELLDARMQRDTLSEFRTGQKNLIIATDVLEEGIDISACSVVVCFDKPPNLKSFVQRRGRARHRQSTYAIMFATDDESSALSKWEDLEQAMIEAYEDDERRLREAWALEAINEEVVERLEVQSTGAVLTADTAVAHLNHFCAVLPRQPYASNEPEFSYEKDDADLLRGTVTLPSCVHPGVRRIQGQRWWQTERAARKEAAFQAYKRLYEFGLLSDHLLPFKRNLELKETDLTNLPALVEVSEQYDPWVDWACSWSSPDVHQTRIAIKHNGDSRMCIRLTSPTSLPPVEPMTLFWDSETIYTLDFDKPKRMKEIAAESIENMRLATALYLQAASSRQMRPEQDFVTLFGPDLTDLELAEWLNKHAGDEPALEVYSRKDFPTVMGIVRDRSRYNEPMLFKRWVVSGQDDTPIVELECDAVPKRRNLLHRQTLAAKQPDSETPAISSKIRLILAENCTIDKLPYAETIFGRFISVILDRLEATLVATRLCETILRDLEFSSIRHIITAITAPSAQSLTNYQRYEFFGDSVLKFTVSCQLFFQHPNWHEGYLSEGRDEIVQNSRLARAALDAGLDAFIMNKMFTPRKWSAPLISEKISLTPKQRTMSTKVLADVVEALIGASYIDGGFAAAHACIHRFLPEVNLENIDRTTAPMPKDGVTNHTLNDDHLMAHIGYTFTNKSLLVESLTHPSCQFDTTTQSYQRLEFLGDAVLDMAIMSTLLSHPREIPQGLMTKIKHAVVNANLLAFFCMEFALTEKRTNVQVTPTGTVTLNPSTEHIELWRFMRYQGAHLQTARDLALSRHSSLRGSIIHGLKHSPSYPWKSLSQLNADKFFSDIIESILGAIFIDSHGNLAECEKFLERLGLLRYLRRILKDEVDVMHPRNIAQQMAKGEIRFEVLRVPNEGGGGGEDDGATYRCTVKMAGVDGVAVVVEGCLTSEEAEITAAERAVEILVGRGCSL.

In terms of domain architecture, Helicase ATP-binding spans 26 to 205; sequence MFEASLKENI…LLKIESNLDA (180 aa). Residue 39 to 46 coordinates ATP; that stretch reads MGTGSGKT. Residues 146-149 carry the DEAH box motif; it reads DEAH. One can recognise a Helicase C-terminal domain in the interval 370-535; the sequence is KFRSLLEFLD…AYEDDERRLR (166 aa). The 95-residue stretch at 565–659 folds into the Dicer dsRNA-binding fold domain; it reads AVAHLNHFCA…LPFKRNLELK (95 aa). 2 consecutive RNase III domains span residues 915 to 1055 and 1094 to 1277; these read ATRL…IDGG and DDHL…IDSH. 3 residues coordinate Mg(2+): E1133, D1263, and E1266.

Belongs to the helicase family. Dicer subfamily. It depends on Mg(2+) as a cofactor. Mn(2+) is required as a cofactor.

Dicer-like endonuclease involved in cleaving double-stranded RNA in the RNA interference (RNAi) pathway. Produces 21 to 25 bp dsRNAs (siRNAs) which target the selective destruction of homologous RNAs leading to sequence-specific suppression of gene expression, called post-transcriptional gene silencing (PTGS). Part of a broad host defense response against viral infection and transposons. The chain is Dicer-like protein 2-1 (dcl2-1) from Aspergillus niger (strain ATCC MYA-4892 / CBS 513.88 / FGSC A1513).